The primary structure comprises 566 residues: Sulfite reductase [NADPH] hemoprotein beta-component (566 aa).

[4Fe-4S] cluster-binding residues include Cys-430, Cys-436, Cys-475, and Cys-479. Cys-479 is a siroheme binding site.

This sequence belongs to the nitrite and sulfite reductase 4Fe-4S domain family. Alpha(8)-beta(8). The alpha component is a flavoprotein, the beta component is a hemoprotein. Siroheme is required as a cofactor. [4Fe-4S] cluster serves as cofactor.

The enzyme catalyses hydrogen sulfide + 3 NADP(+) + 3 H2O = sulfite + 3 NADPH + 4 H(+). The protein operates within sulfur metabolism; hydrogen sulfide biosynthesis; hydrogen sulfide from sulfite (NADPH route): step 1/1. Functionally, component of the sulfite reductase complex that catalyzes the 6-electron reduction of sulfite to sulfide. This is one of several activities required for the biosynthesis of L-cysteine from sulfate. This is Sulfite reductase [NADPH] hemoprotein beta-component from Baumannia cicadellinicola subsp. Homalodisca coagulata.